Consider the following 562-residue polypeptide: Arginine--tRNA ligase (562 aa).

A 'HIGH' region motif is present at residues 121-131 (PNIAKPFSVGH).

It belongs to the class-I aminoacyl-tRNA synthetase family. As to quaternary structure, monomer.

It localises to the cytoplasm. The enzyme catalyses tRNA(Arg) + L-arginine + ATP = L-arginyl-tRNA(Arg) + AMP + diphosphate. In Streptococcus suis (strain 98HAH33), this protein is Arginine--tRNA ligase.